The following is a 317-amino-acid chain: Melanocyte-stimulating hormone receptor (317 aa).

The Extracellular portion of the chain corresponds to 1–37 (MPAQGSQRSLLGSLNSTLMATSSLGLSANQSGPQCLE). 2 N-linked (GlcNAc...) asparagine glycosylation sites follow: Asn-15 and Asn-29. A helical transmembrane segment spans residues 38–63 (VSVPDGLFLCLGLVSLVENMLVVAAI). The Cytoplasmic segment spans residues 64-72 (AKNRNLHSP). A helical transmembrane segment spans residues 73–93 (MYCFICCLALSDLLVSVSNVL). Residues 94–118 (ETAVMLLLEAGALAAQATVVQQLDN) lie on the Extracellular side of the membrane. A helical membrane pass occupies residues 119–140 (IIDVLVCSSMVSSLCFLGAIAM). Residues 141-163 (DRYISIFYALRYHSIVTLSRAQW) are Cytoplasmic-facing. Residues 164–183 (ATAAVWAAGILSSTLFIAYY) traverse the membrane as a helical segment. Residues 184 to 191 (DHTAVLLC) lie on the Extracellular side of the membrane. A helical transmembrane segment spans residues 192 to 211 (LVVFFLAMLVLMAVLYAHML). Topologically, residues 212 to 240 (TQACQHVQGITRLHKRQHLVQQGFGLKGA) are cytoplasmic. Residues 241–266 (ATLTILLGVFLLCWGPFFLHLTLIAV) form a helical membrane-spanning segment. The Extracellular segment spans residues 267 to 279 (CPQHPTCSCVFKN). The chain crosses the membrane as a helical span at residues 280–300 (FKLFLALIICNAIVDPLIYAF). Topologically, residues 301 to 317 (RXQELRKTLKEVLLFSW) are cytoplasmic.

This sequence belongs to the G-protein coupled receptor 1 family. As to quaternary structure, interacts with MGRN1, but does not undergo MGRN1-mediated ubiquitination; this interaction competes with GNAS-binding and thus inhibits agonist-induced cAMP production. Interacts with OPN3; the interaction results in a decrease in MC1R-mediated cAMP signaling and ultimately a decrease in melanin production in melanocytes.

The protein resides in the cell membrane. Receptor for MSH (alpha, beta and gamma) and ACTH. The activity of this receptor is mediated by G proteins which activate adenylate cyclase. Mediates melanogenesis, the production of eumelanin (black/brown) and phaeomelanin (red/yellow), via regulation of cAMP signaling in melanocytes. This is Melanocyte-stimulating hormone receptor (MC1R) from Loris tardigradus (Slender loris).